Reading from the N-terminus, the 155-residue chain is 6,7-dimethyl-8-ribityllumazine synthase (155 aa).

5-amino-6-(D-ribitylamino)uracil contacts are provided by residues W22, 56–58 (SFE), and 80–82 (AVI). Residue 85 to 86 (AT) coordinates (2S)-2-hydroxy-3-oxobutyl phosphate. The active-site Proton donor is the H88. Residue F113 coordinates 5-amino-6-(D-ribitylamino)uracil. Position 127 (R127) interacts with (2S)-2-hydroxy-3-oxobutyl phosphate.

This sequence belongs to the DMRL synthase family.

It carries out the reaction (2S)-2-hydroxy-3-oxobutyl phosphate + 5-amino-6-(D-ribitylamino)uracil = 6,7-dimethyl-8-(1-D-ribityl)lumazine + phosphate + 2 H2O + H(+). Its pathway is cofactor biosynthesis; riboflavin biosynthesis; riboflavin from 2-hydroxy-3-oxobutyl phosphate and 5-amino-6-(D-ribitylamino)uracil: step 1/2. In terms of biological role, catalyzes the formation of 6,7-dimethyl-8-ribityllumazine by condensation of 5-amino-6-(D-ribitylamino)uracil with 3,4-dihydroxy-2-butanone 4-phosphate. This is the penultimate step in the biosynthesis of riboflavin. The chain is 6,7-dimethyl-8-ribityllumazine synthase from Chloroflexus aurantiacus (strain ATCC 29364 / DSM 637 / Y-400-fl).